We begin with the raw amino-acid sequence, 294 residues long: Malate dehydrogenase (294 aa).

Residues 7-12 (GAGRVG) and Asp32 contribute to the NAD(+) site. Substrate contacts are provided by Arg81 and Arg87. NAD(+)-binding positions include Asn94 and 117-119 (VTN). Substrate is bound by residues Asn119 and Arg150. His172 serves as the catalytic Proton acceptor.

Belongs to the LDH/MDH superfamily. In terms of assembly, homodimer.

The protein resides in the cytoplasm. It catalyses the reaction (S)-malate + NAD(+) = oxaloacetate + NADH + H(+). In terms of biological role, catalyzes the reversible oxidation of malate to oxaloacetate. Can also oxidize tartrate. This Archaeoglobus fulgidus (strain ATCC 49558 / DSM 4304 / JCM 9628 / NBRC 100126 / VC-16) protein is Malate dehydrogenase (mdh).